The sequence spans 423 residues: Serine--tRNA ligase (423 aa).

Residue 231 to 233 coordinates L-serine; that stretch reads TAE. Residue 262–264 participates in ATP binding; sequence RSE. L-serine is bound at residue E285. 349–352 provides a ligand contact to ATP; sequence EISS. Residue S384 coordinates L-serine.

This sequence belongs to the class-II aminoacyl-tRNA synthetase family. Type-1 seryl-tRNA synthetase subfamily. As to quaternary structure, homodimer. The tRNA molecule binds across the dimer.

The protein resides in the cytoplasm. It catalyses the reaction tRNA(Ser) + L-serine + ATP = L-seryl-tRNA(Ser) + AMP + diphosphate + H(+). The catalysed reaction is tRNA(Sec) + L-serine + ATP = L-seryl-tRNA(Sec) + AMP + diphosphate + H(+). The protein operates within aminoacyl-tRNA biosynthesis; selenocysteinyl-tRNA(Sec) biosynthesis; L-seryl-tRNA(Sec) from L-serine and tRNA(Sec): step 1/1. Functionally, catalyzes the attachment of serine to tRNA(Ser). Is also able to aminoacylate tRNA(Sec) with serine, to form the misacylated tRNA L-seryl-tRNA(Sec), which will be further converted into selenocysteinyl-tRNA(Sec). This Acinetobacter baumannii (strain AB307-0294) protein is Serine--tRNA ligase.